Here is a 147-residue protein sequence, read N- to C-terminus: Large ribosomal subunit protein uL15 (147 aa).

Residues 1 to 54 (MKLFELQPAPGSKKLPNRKGRGIGSGNGKTGGRGHKGQNARAGGGVRPGFEGGQ) form a disordered region. Composition is skewed to gly residues over residues 22 to 31 (GIGSGNGKTG) and 42 to 52 (AGGGVRPGFEG).

This sequence belongs to the universal ribosomal protein uL15 family. Part of the 50S ribosomal subunit.

In terms of biological role, binds to the 23S rRNA. The polypeptide is Large ribosomal subunit protein uL15 (Ruminiclostridium cellulolyticum (strain ATCC 35319 / DSM 5812 / JCM 6584 / H10) (Clostridium cellulolyticum)).